The sequence spans 335 residues: MRHCISVLGAGSWGTALALLIARNGVPTLLWSHRREHAEAMAAERRNAHYLPHATFPDTLSVTPDLAEAAATASDAVLVAVPSHAFRATLDLCAPHLQPEAGLMWATKGLDRTRGCLLHETAREILGPDRALAVLSGPTFAAEVVAELPSAITVGASSEAFGAKIVSWLHNAYFRAYTTDDLIGAQLGGACKNVLAIAAGISDGLGFGANARAALITRGLAEMMRLSLALGARTETLMGLAGVGDLVLTATDNQSRNRRFGLGVGKGRPREEIHAEIGQEIEGILAARLIHELAGRKGVDMPITAQTYRVLYEGLPPEEAVRNLLLRDPKPEWDR.

NADPH-binding residues include Ser12, Trp13, His33, Arg34, and Lys108. Positions 108, 137, and 139 each coordinate sn-glycerol 3-phosphate. Ala141 contacts NADPH. Residues Lys192, Asp245, Ser255, Arg256, and Asn257 each contribute to the sn-glycerol 3-phosphate site. Lys192 (proton acceptor) is an active-site residue. Arg256 contacts NADPH. Glu282 contacts NADPH.

The protein belongs to the NAD-dependent glycerol-3-phosphate dehydrogenase family.

It localises to the cytoplasm. The enzyme catalyses sn-glycerol 3-phosphate + NAD(+) = dihydroxyacetone phosphate + NADH + H(+). The catalysed reaction is sn-glycerol 3-phosphate + NADP(+) = dihydroxyacetone phosphate + NADPH + H(+). The protein operates within membrane lipid metabolism; glycerophospholipid metabolism. Catalyzes the reduction of the glycolytic intermediate dihydroxyacetone phosphate (DHAP) to sn-glycerol 3-phosphate (G3P), the key precursor for phospholipid synthesis. The polypeptide is Glycerol-3-phosphate dehydrogenase [NAD(P)+] (Methylococcus capsulatus (strain ATCC 33009 / NCIMB 11132 / Bath)).